Consider the following 228-residue polypeptide: Urease accessory protein UreG (228 aa).

34 to 41 (GPVGSGKT) contributes to the GTP binding site.

This sequence belongs to the SIMIBI class G3E GTPase family. UreG subfamily. In terms of assembly, homodimer. UreD, UreF and UreG form a complex that acts as a GTP-hydrolysis-dependent molecular chaperone, activating the urease apoprotein by helping to assemble the nickel containing metallocenter of UreC. The UreE protein probably delivers the nickel.

It is found in the cytoplasm. Its function is as follows. Facilitates the functional incorporation of the urease nickel metallocenter. This process requires GTP hydrolysis, probably effectuated by UreG. In Rhodococcus opacus (strain B4), this protein is Urease accessory protein UreG.